Here is a 168-residue protein sequence, read N- to C-terminus: Phosphopantetheine adenylyltransferase (168 aa).

T13 is a binding site for substrate. ATP contacts are provided by residues 13 to 14 (TF) and H21. Substrate contacts are provided by K45, L78, and R92. ATP contacts are provided by residues 93 to 95 (GLR), E103, and 128 to 134 (TQFISSG).

The protein belongs to the bacterial CoaD family. As to quaternary structure, homohexamer. It depends on Mg(2+) as a cofactor.

The protein localises to the cytoplasm. It catalyses the reaction (R)-4'-phosphopantetheine + ATP + H(+) = 3'-dephospho-CoA + diphosphate. It functions in the pathway cofactor biosynthesis; coenzyme A biosynthesis; CoA from (R)-pantothenate: step 4/5. Its function is as follows. Reversibly transfers an adenylyl group from ATP to 4'-phosphopantetheine, yielding dephospho-CoA (dPCoA) and pyrophosphate. This chain is Phosphopantetheine adenylyltransferase, found in Wolbachia sp. subsp. Drosophila simulans (strain wRi).